Here is a 637-residue protein sequence, read N- to C-terminus: Threonine--tRNA ligase (637 aa).

The TGS domain maps to 1 to 61 (MLNITLPDGS…VEDSAVQIIT (61 aa)). The segment at 242 to 533 (DHRKLGKQLD…LIENHAGSFP (292 aa)) is catalytic. Positions 333, 384, and 510 each coordinate Zn(2+).

Belongs to the class-II aminoacyl-tRNA synthetase family. Homodimer. The cofactor is Zn(2+).

It localises to the cytoplasm. The enzyme catalyses tRNA(Thr) + L-threonine + ATP = L-threonyl-tRNA(Thr) + AMP + diphosphate + H(+). Its function is as follows. Catalyzes the attachment of threonine to tRNA(Thr) in a two-step reaction: L-threonine is first activated by ATP to form Thr-AMP and then transferred to the acceptor end of tRNA(Thr). Also edits incorrectly charged L-seryl-tRNA(Thr). The protein is Threonine--tRNA ligase of Neisseria meningitidis serogroup B (strain ATCC BAA-335 / MC58).